The following is a 157-amino-acid chain: S-ribosylhomocysteine lyase (157 aa).

Positions 54, 58, and 126 each coordinate Fe cation.

Belongs to the LuxS family. In terms of assembly, homodimer. It depends on Fe cation as a cofactor.

It catalyses the reaction S-(5-deoxy-D-ribos-5-yl)-L-homocysteine = (S)-4,5-dihydroxypentane-2,3-dione + L-homocysteine. Involved in the synthesis of autoinducer 2 (AI-2) which is secreted by bacteria and is used to communicate both the cell density and the metabolic potential of the environment. The regulation of gene expression in response to changes in cell density is called quorum sensing. Catalyzes the transformation of S-ribosylhomocysteine (RHC) to homocysteine (HC) and 4,5-dihydroxy-2,3-pentadione (DPD). This Bacillus cereus (strain 03BB102) protein is S-ribosylhomocysteine lyase.